We begin with the raw amino-acid sequence, 230 residues long: UPF0502 protein Patl_1161 (230 aa).

This sequence belongs to the UPF0502 family.

The sequence is that of UPF0502 protein Patl_1161 from Pseudoalteromonas atlantica (strain T6c / ATCC BAA-1087).